A 328-amino-acid chain; its full sequence is GTP 3',8-cyclase (328 aa).

The 229-residue stretch at 1–229 (MNTVDYLRIS…ESFVPGNGPA (229 aa)) folds into the Radical SAM core domain. R8 is a binding site for GTP. Residues C15 and C19 each coordinate [4Fe-4S] cluster. Y21 lines the S-adenosyl-L-methionine pocket. C22 contributes to the [4Fe-4S] cluster binding site. R60 lines the GTP pocket. Residue G64 coordinates S-adenosyl-L-methionine. T91 provides a ligand contact to GTP. S115 provides a ligand contact to S-adenosyl-L-methionine. K155 lines the GTP pocket. Residue M189 coordinates S-adenosyl-L-methionine. C252 and C255 together coordinate [4Fe-4S] cluster. Position 257–259 (257–259 (RMR)) interacts with GTP. Position 269 (C269) interacts with [4Fe-4S] cluster.

This sequence belongs to the radical SAM superfamily. MoaA family. In terms of assembly, monomer and homodimer. It depends on [4Fe-4S] cluster as a cofactor.

It catalyses the reaction GTP + AH2 + S-adenosyl-L-methionine = (8S)-3',8-cyclo-7,8-dihydroguanosine 5'-triphosphate + 5'-deoxyadenosine + L-methionine + A + H(+). It participates in cofactor biosynthesis; molybdopterin biosynthesis. In terms of biological role, catalyzes the cyclization of GTP to (8S)-3',8-cyclo-7,8-dihydroguanosine 5'-triphosphate. This is GTP 3',8-cyclase from Trichodesmium erythraeum (strain IMS101).